The primary structure comprises 245 residues: 1-(5-phosphoribosyl)-5-[(5-phosphoribosylamino)methylideneamino] imidazole-4-carboxamide isomerase (245 aa).

The Proton acceptor role is filled by aspartate 7. The Proton donor role is filled by aspartate 129.

This sequence belongs to the HisA/HisF family.

It localises to the cytoplasm. It catalyses the reaction 1-(5-phospho-beta-D-ribosyl)-5-[(5-phospho-beta-D-ribosylamino)methylideneamino]imidazole-4-carboxamide = 5-[(5-phospho-1-deoxy-D-ribulos-1-ylimino)methylamino]-1-(5-phospho-beta-D-ribosyl)imidazole-4-carboxamide. Its pathway is amino-acid biosynthesis; L-histidine biosynthesis; L-histidine from 5-phospho-alpha-D-ribose 1-diphosphate: step 4/9. The protein is 1-(5-phosphoribosyl)-5-[(5-phosphoribosylamino)methylideneamino] imidazole-4-carboxamide isomerase of Salmonella agona (strain SL483).